The sequence spans 493 residues: Cobyric acid synthase (493 aa).

In terms of domain architecture, GATase cobBQ-type spans 246 to 440 (PIDIAVIKMP…IHGVFDGVVF (195 aa)). The active-site Nucleophile is the Cys326. His432 is a catalytic residue.

It belongs to the CobB/CobQ family. CobQ subfamily.

Its pathway is cofactor biosynthesis; adenosylcobalamin biosynthesis. In terms of biological role, catalyzes amidations at positions B, D, E, and G on adenosylcobyrinic A,C-diamide. NH(2) groups are provided by glutamine, and one molecule of ATP is hydrogenolyzed for each amidation. This Clostridium botulinum (strain ATCC 19397 / Type A) protein is Cobyric acid synthase.